We begin with the raw amino-acid sequence, 95 residues long: uncharacterized protein (95 aa).

Residues 1-22 (MLPGFTMIITSLLLTFFREVEH) form the signal peptide. Over 23 to 52 (LLPECLTITNTPQRTLVLIQRFTLLQKVMT) the chain is Extracellular. Residues 53 to 69 (IHLLLSIGTLGSLFTLH) form a helical membrane-spanning segment. At 70–95 (PQLLKTNLLQKLHKELNSNLDYLISC) the chain is on the cytoplasmic side.

It localises to the host membrane. This is an uncharacterized protein from Acidianus bottle-shaped virus (isolate Italy/Pozzuoli) (ABV).